The sequence spans 315 residues: Calumenin (315 aa).

Residues 1 to 19 (MDLRQFLMCLSLCTAFALS) form the signal peptide. Ser-44 carries the phosphoserine modification. Tyr-47 carries the phosphotyrosine modification. Position 65 is a phosphothreonine (Thr-65). EF-hand domains follow at residues 68–103 (ESKE…AQKK), 104–139 (YIYD…TYLD), 151–186 (QMMV…EEYD), 188–223 (MKDI…HDGN), 229–264 (WVKT…SDYD), and 265–300 (HAEA…FVGS). Ser-69 carries the post-translational modification Phosphoserine. Ca(2+) contacts are provided by Asp-81, Asp-83, Asp-85, Glu-92, Asp-117, Asn-119, Asp-121, and Glu-128. The N-linked (GlcNAc...) asparagine glycan is linked to Asn-131. Asp-164 provides a ligand contact to Ca(2+). N6-acetyllysine is present on Lys-165. Positions 166, 168, 175, 201, 203, 205, 212, 242, 244, 246, 248, and 253 each coordinate Ca(2+). Thr-254 carries the post-translational modification Phosphothreonine. Ser-261 and Ser-277 each carry phosphoserine. 5 residues coordinate Ca(2+): Asp-278, Asn-280, Asp-282, Lys-284, and Glu-289. Positions 312 to 315 (HDEF) match the Prevents secretion from ER motif.

This sequence belongs to the CREC family. In terms of assembly, interacts with GGCX.

The protein localises to the endoplasmic reticulum membrane. It localises to the golgi apparatus. It is found in the secreted. The protein resides in the melanosome. Its subcellular location is the sarcoplasmic reticulum lumen. Its function is as follows. Involved in regulation of vitamin K-dependent carboxylation of multiple N-terminal glutamate residues. Seems to inhibit gamma-carboxylase GGCX. Binds 7 calcium ions with a low affinity. The polypeptide is Calumenin (CALU) (Bos taurus (Bovine)).